The primary structure comprises 37 residues: Esculentin-2B (37 aa).

Cys-31 and Cys-37 are joined by a disulfide.

Expressed by the skin glands.

The protein resides in the secreted. Antibacterial activity against Gram-positive bacterium S.aureus and Gram-negative bacterium E.coli. Has activity against C.albicans. The chain is Esculentin-2B from Lithobates berlandieri (Rio Grande leopard frog).